The following is a 489-amino-acid chain: Glycogen synthase (489 aa).

Arginine 20 provides a ligand contact to ADP-alpha-D-glucose.

This sequence belongs to the glycosyltransferase 1 family. Bacterial/plant glycogen synthase subfamily.

The enzyme catalyses [(1-&gt;4)-alpha-D-glucosyl](n) + ADP-alpha-D-glucose = [(1-&gt;4)-alpha-D-glucosyl](n+1) + ADP + H(+). The protein operates within glycan biosynthesis; glycogen biosynthesis. Functionally, synthesizes alpha-1,4-glucan chains using ADP-glucose. The protein is Glycogen synthase of Chlorobium phaeobacteroides (strain DSM 266 / SMG 266 / 2430).